The sequence spans 454 residues: Bifunctional protein GlmU (454 aa).

A pyrophosphorylase region spans residues 1 to 225 (MNIVILAAGM…IWETLGVNSK (225 aa)). Residues 6–9 (LAAG), K20, Q71, 76–77 (GT), 98–100 (YGD), G135, E150, N165, and N223 contribute to the UDP-N-acetyl-alpha-D-glucosamine site. Mg(2+) is bound at residue D100. N223 provides a ligand contact to Mg(2+). The tract at residues 226–246 (LQLAEVERIHQGNQARRLLEA) is linker. The interval 247–454 (GVTLLDPARI…WQRPVKQPKK (208 aa)) is N-acetyltransferase. Residues R329 and K347 each coordinate UDP-N-acetyl-alpha-D-glucosamine. The active-site Proton acceptor is H359. UDP-N-acetyl-alpha-D-glucosamine-binding residues include Y362 and N373. Residues A376, 382-383 (NY), S401, A419, and R436 each bind acetyl-CoA.

It in the N-terminal section; belongs to the N-acetylglucosamine-1-phosphate uridyltransferase family. In the C-terminal section; belongs to the transferase hexapeptide repeat family. Homotrimer. Requires Mg(2+) as cofactor.

It is found in the cytoplasm. The enzyme catalyses alpha-D-glucosamine 1-phosphate + acetyl-CoA = N-acetyl-alpha-D-glucosamine 1-phosphate + CoA + H(+). It catalyses the reaction N-acetyl-alpha-D-glucosamine 1-phosphate + UTP + H(+) = UDP-N-acetyl-alpha-D-glucosamine + diphosphate. It participates in nucleotide-sugar biosynthesis; UDP-N-acetyl-alpha-D-glucosamine biosynthesis; N-acetyl-alpha-D-glucosamine 1-phosphate from alpha-D-glucosamine 6-phosphate (route II): step 2/2. The protein operates within nucleotide-sugar biosynthesis; UDP-N-acetyl-alpha-D-glucosamine biosynthesis; UDP-N-acetyl-alpha-D-glucosamine from N-acetyl-alpha-D-glucosamine 1-phosphate: step 1/1. It functions in the pathway bacterial outer membrane biogenesis; LPS lipid A biosynthesis. Catalyzes the last two sequential reactions in the de novo biosynthetic pathway for UDP-N-acetylglucosamine (UDP-GlcNAc). The C-terminal domain catalyzes the transfer of acetyl group from acetyl coenzyme A to glucosamine-1-phosphate (GlcN-1-P) to produce N-acetylglucosamine-1-phosphate (GlcNAc-1-P), which is converted into UDP-GlcNAc by the transfer of uridine 5-monophosphate (from uridine 5-triphosphate), a reaction catalyzed by the N-terminal domain. This chain is Bifunctional protein GlmU, found in Cupriavidus necator (strain ATCC 17699 / DSM 428 / KCTC 22496 / NCIMB 10442 / H16 / Stanier 337) (Ralstonia eutropha).